A 203-amino-acid chain; its full sequence is Glycerol-3-phosphate acyltransferase (203 aa).

The next 5 helical transmembrane spans lie at 12–32 (ATLL…GLIL), 66–86 (TLLL…LWGV), 88–108 (AGIA…WLSF), 118–138 (IGVL…IWLA), and 159–179 (IALY…MTVI).

The protein belongs to the PlsY family. As to quaternary structure, probably interacts with PlsX.

Its subcellular location is the cell inner membrane. It catalyses the reaction an acyl phosphate + sn-glycerol 3-phosphate = a 1-acyl-sn-glycero-3-phosphate + phosphate. Its pathway is lipid metabolism; phospholipid metabolism. Catalyzes the transfer of an acyl group from acyl-phosphate (acyl-PO(4)) to glycerol-3-phosphate (G3P) to form lysophosphatidic acid (LPA). This enzyme utilizes acyl-phosphate as fatty acyl donor, but not acyl-CoA or acyl-ACP. The polypeptide is Glycerol-3-phosphate acyltransferase (Sinorhizobium fredii (strain NBRC 101917 / NGR234)).